Consider the following 241-residue polypeptide: uncharacterized protein (241 aa).

5 helical membrane-spanning segments follow: residues 7 to 27, 37 to 57, 72 to 92, 110 to 130, and 138 to 158; these read LIFLLFVIVVSYIFNGLWSVF, LFLLIAFHPQHLDGLIILLLI, IIALVGILLTIIKGVIKSGFG, INLVVFSILLTSVYVLGYVAF, and FGTLYTAFGGLALLGAGIKII.

It is found in the cell membrane. This is an uncharacterized protein from Methanocaldococcus jannaschii (strain ATCC 43067 / DSM 2661 / JAL-1 / JCM 10045 / NBRC 100440) (Methanococcus jannaschii).